Consider the following 581-residue polypeptide: Proline--tRNA ligase (581 aa).

The protein belongs to the class-II aminoacyl-tRNA synthetase family. ProS type 1 subfamily. In terms of assembly, homodimer.

Its subcellular location is the cytoplasm. The catalysed reaction is tRNA(Pro) + L-proline + ATP = L-prolyl-tRNA(Pro) + AMP + diphosphate. In terms of biological role, catalyzes the attachment of proline to tRNA(Pro) in a two-step reaction: proline is first activated by ATP to form Pro-AMP and then transferred to the acceptor end of tRNA(Pro). As ProRS can inadvertently accommodate and process non-cognate amino acids such as alanine and cysteine, to avoid such errors it has two additional distinct editing activities against alanine. One activity is designated as 'pretransfer' editing and involves the tRNA(Pro)-independent hydrolysis of activated Ala-AMP. The other activity is designated 'posttransfer' editing and involves deacylation of mischarged Ala-tRNA(Pro). The misacylated Cys-tRNA(Pro) is not edited by ProRS. The protein is Proline--tRNA ligase of Azoarcus sp. (strain BH72).